The following is a 475-amino-acid chain: MHDNTYLPDHFLRHIAAIMPAHLSMDEFVASCRRPLRRSIRVNTLKISVAAFVARMQPLGWQLDPVPWCDTGFWLSREDESVPLGNTAEHLSGLFYIQEASSMLPVTALFACEQTRRDGMLLDAAAAPGSKTTQIAALMNNQGMLVANEYSSSRLKVLSANLQRCGVTNVGMTHFDAKVFGQWLPETFDAILLDAPCSGEGSVRKDEDALRNWSIESIDEIAAVQQGLLESAFHALKPGGVLVYSTCTLSLQENQAVCQSLLDKFGAAFSFDSLADLFPAAEQACTPEGYLHVWPQIFDSEGFFVARLRKHYSVPNTMFKPGKLGKFPFLPLPAKESEPMLREIEAAFGVVPQGNLFGRSEEIWLFPQRFEQVQGKLRFDRIGLKLAETFKKGYRLTHEWALAYGDGASKGFVELGIADAREFMMGRDVWPEQAAGTGEVIVRYQGHTLGMGKWVGSRVKNALPRELVRDNNLFV.

S-adenosyl-L-methionine-binding positions include 125–131 (AAAPGSK), Glu-149, Asp-176, and Asp-194. Cys-247 (nucleophile) is an active-site residue.

It belongs to the class I-like SAM-binding methyltransferase superfamily. RsmB/NOP family.

It localises to the cytoplasm. The catalysed reaction is cytidine(1407) in 16S rRNA + S-adenosyl-L-methionine = 5-methylcytidine(1407) in 16S rRNA + S-adenosyl-L-homocysteine + H(+). Specifically methylates the cytosine at position 1407 (m5C1407) of 16S rRNA. The chain is Ribosomal RNA small subunit methyltransferase F from Aeromonas hydrophila subsp. hydrophila (strain ATCC 7966 / DSM 30187 / BCRC 13018 / CCUG 14551 / JCM 1027 / KCTC 2358 / NCIMB 9240 / NCTC 8049).